Here is a 432-residue protein sequence, read N- to C-terminus: Adenosine 3'-phospho 5'-phosphosulfate transporter 1 (432 aa).

The next 9 membrane-spanning stretches (helical) occupy residues 5-25 (WWAVVVLAAFPSLGAGGETPE), 40-60 (VVNAAGYASFMVPGYLLVQYF), 109-129 (ALKLLFCATGLQVSYLTWGVL), 154-174 (FLVLMNRVLALIVAGLSCVLC), 238-258 (WEYLTATLISIGVSMFLLSSG), 265-285 (PATTLSGLILLAGYIAFDSFT), 299-319 (SVQMMFGVNFFSCLFTVGSLL), 353-373 (LFIFYTIGQFGAAVFTIIMTL), and 387-407 (GHTVTVVGGLGVAVVFAALLL). S427 carries the phosphoserine modification.

It belongs to the nucleotide-sugar transporter family. SLC35B subfamily. In terms of tissue distribution, highly expressed in the placenta, pancreas, mammary gland and skeletal muscle. Weakly or not expressed in colon, heart and prostate. Expressed in the brain, predominantly in frontal lobe gray matter, subcortical frontal white matter and cerebellum.

The protein resides in the golgi apparatus membrane. It catalyses the reaction 3'-phosphoadenylyl sulfate(in) + adenosine 3',5'-bisphosphate(out) = 3'-phosphoadenylyl sulfate(out) + adenosine 3',5'-bisphosphate(in). Its function is as follows. Probably functions as a 3'-phosphoadenylyl sulfate:adenosine 3',5'-bisphosphate antiporter at the Golgi membranes. Mediates the transport from the cytosol into the lumen of the Golgi of 3'-phosphoadenylyl sulfate/adenosine 3'-phospho 5'-phosphosulfate (PAPS), a universal sulfuryl donor for sulfation events that take place in that compartment. The sequence is that of Adenosine 3'-phospho 5'-phosphosulfate transporter 1 from Homo sapiens (Human).